We begin with the raw amino-acid sequence, 403 residues long: Putative F-box/LRR-repeat protein At5g38386 (403 aa).

Residues 1–47 (MDHLSNLPDELLCHIMSFLTTKEAALISVLSKRWRNLIAFVPNLDIF) enclose the F-box domain. 6 LRR repeats span residues 64–91 (IRQLFMDFVDRVLALQGNSPLKKFSLCC), 93–119 (GGSYSDRVDCWIQNVMVRGVSELDLSM), 131–156 (VFENKKLNFEIFLRALPALEELVMNH), 175–203 (LKTLTIKCIVCLHTKSFDTPSLAYLSYSD), 243–274 (YLYFSRDTLEVLSLCCESMPVFKNLKSLSIKS), and 275–300 (VESRGWQAMPVLLRNCPHLETLVLEA).

The polypeptide is Putative F-box/LRR-repeat protein At5g38386 (Arabidopsis thaliana (Mouse-ear cress)).